The chain runs to 196 residues: Large ribosomal subunit protein uL5 (196 aa).

Belongs to the universal ribosomal protein uL5 family. In terms of assembly, part of the 50S ribosomal subunit; part of the 5S rRNA/L5/L18/L25 subcomplex. Contacts the 5S rRNA and the P site tRNA. Forms a bridge to the 30S subunit in the 70S ribosome.

Functionally, this is one of the proteins that bind and probably mediate the attachment of the 5S RNA into the large ribosomal subunit, where it forms part of the central protuberance. In the 70S ribosome it contacts protein S13 of the 30S subunit (bridge B1b), connecting the 2 subunits; this bridge is implicated in subunit movement. Contacts the P site tRNA; the 5S rRNA and some of its associated proteins might help stabilize positioning of ribosome-bound tRNAs. This chain is Large ribosomal subunit protein uL5, found in Chlorobium phaeobacteroides (strain BS1).